A 589-amino-acid chain; its full sequence is Aspartate--tRNA ligase (589 aa).

Glu-171 contacts L-aspartate. Residues 195-198 form an aspartate region; the sequence is QLFK. Arg-217 serves as a coordination point for L-aspartate. ATP contacts are provided by residues 217–219 and Gln-226; that span reads RDE. L-aspartate is bound at residue His-448. Glu-482 contacts ATP. An L-aspartate-binding site is contributed by Arg-489. Residue 534–537 participates in ATP binding; the sequence is GLDR.

It belongs to the class-II aminoacyl-tRNA synthetase family. Type 1 subfamily. In terms of assembly, homodimer.

The protein resides in the cytoplasm. The enzyme catalyses tRNA(Asp) + L-aspartate + ATP = L-aspartyl-tRNA(Asp) + AMP + diphosphate. Its function is as follows. Catalyzes the attachment of L-aspartate to tRNA(Asp) in a two-step reaction: L-aspartate is first activated by ATP to form Asp-AMP and then transferred to the acceptor end of tRNA(Asp). This is Aspartate--tRNA ligase from Idiomarina loihiensis (strain ATCC BAA-735 / DSM 15497 / L2-TR).